Consider the following 234-residue polypeptide: 2-hydroxy-3-keto-5-methylthiopentenyl-1-phosphate phosphatase (234 aa).

It belongs to the HAD-like hydrolase superfamily. MtnX family.

It carries out the reaction 2-hydroxy-5-methylsulfanyl-3-oxopent-1-enyl phosphate + H2O = 1,2-dihydroxy-5-(methylsulfanyl)pent-1-en-3-one + phosphate. It participates in amino-acid biosynthesis; L-methionine biosynthesis via salvage pathway; L-methionine from S-methyl-5-thio-alpha-D-ribose 1-phosphate: step 4/6. Its function is as follows. Dephosphorylates 2-hydroxy-3-keto-5-methylthiopentenyl-1-phosphate (HK-MTPenyl-1-P) yielding 1,2-dihydroxy-3-keto-5-methylthiopentene (DHK-MTPene). The sequence is that of 2-hydroxy-3-keto-5-methylthiopentenyl-1-phosphate phosphatase from Bacillus velezensis (strain DSM 23117 / BGSC 10A6 / LMG 26770 / FZB42) (Bacillus amyloliquefaciens subsp. plantarum).